A 1261-amino-acid polypeptide reads, in one-letter code: MPIDAESEAELRSEAEAPPGGFGKLMRVFTFATAVDRLIQIGCAFAAVCSGAAMPLMALILGRLTANFTDYGSSGDDKSTAEFMKSVQTNALWFVYLFIGKFTLVYLWSFGFTFTASRMLQAMRLTCLDRILDRTVAANDEETPGSLSNTVTSQCNSIQAALSDRLGIMIQAFSMLLASFAVAFSQSWQLTLVMLGLVIITLGLIGFIVSSDQKIEAGLLKRYAECSIIAEDALGSIRTVIAFGAAHKFLAKYNEILKKTETDGKKKGPFVGLMFACQYFFMFVGWAIGFYLGAYLFTKGMISDPGRILSVFFAMLIGLGAIMALGPNMPSFIKAIAAADVAFKILDDGTDQNQDSESQKDASQPEKIACQGHVELRDMSFAYRGREDRNALDKINLSFERGTSTAIVGPSGAGKSTLISLLERWYEPTAGSIFLDGNDIFQLDPKWLRSQIALVQQEPQLFNASIFDNIAYGLIGTEQENLSPEDKQTLVHDACRHARAYEFITKLPESFDTMVGDRASLISGGQKQRIAIARALVARRPILLMDEATSALDNENSKVIEALMTNSIDRTTIFISHKIRAATKADRVVVLDHGKVSEQGTHEELLSAGGLYKRLYDAQTEVESSDDEDPIKTITKTPIPTVVEKTEEASGGPQASIAEPSDNLPQIPKRNLLANLWEIAKEQRRYWPIFLIGLVACVVTAQIFPVQAILLGRVMQVFQGPPEKVSSDANFWSLMFFVVGLGAMISYAILGFFMTLLGVYLTRFYRLEYFRAVLQQPVEFFDRVASGTLLSRLSSDPSNLHELISINMGLLISIFVSVISASIIGLAYSWKFALVAIFAAMPAVFAAGYLRMKLDSSLAEEMEKISEESARFVSDSLSAFRTVKAFTMETAVHHMYNECLVSFAGRLYRQRAVMTLFFAFSESVELLASALGFWYGGKLMGDGELSTEKFFTVFIAVVVGGQAAGALFGFSSNLGKAKIAANNILGIRSQVRAAAARDQSRQMAEENHSEKTENTVVDMQNVTFAYPARPNVPVLKGISFKVYRGQTVGVVGTSGSGKSTLLALLERFYEAQSGTVNVLGRPISAHDIDEYRKRLAIVPQEPQLYNGTVRDNVILGLDEDKVQEADVATACEAAGLGEFISSLPDGFNTQCRGQGVSFSGGQKQRVAIARALIMHPELLLLDEPTSALDAESEQLVRETLGNIQEGRTMILVTHRLNIVRNAHVIIVMDGGRIVEQGTHTELMAKQGNYFKMHESSNGGEA.

The chain crosses the membrane as a helical span at residues 41–61; it reads IGCAFAAVCSGAAMPLMALIL. One can recognise an ABC transmembrane type-1 1 domain in the interval 41 to 334; it reads IGCAFAAVCS…LGPNMPSFIK (294 aa). Residue N67 is glycosylated (N-linked (GlcNAc...) asparagine). Transmembrane regions (helical) follow at residues 92–112, 166–186, 190–210, 270–290, and 308–328; these read LWFV…SFGF, LGIM…AFSQ, LTLV…FIVS, FVGL…AIGF, and ILSV…LGPN. The 245-residue stretch at 374 to 618 folds into the ABC transporter 1 domain; that stretch reads VELRDMSFAY…GGLYKRLYDA (245 aa). An N-linked (GlcNAc...) asparagine glycan is attached at N396. Residue 409 to 416 participates in ATP binding; it reads GPSGAGKS. N463 carries N-linked (GlcNAc...) asparagine glycosylation. The next 6 membrane-spanning stretches (helical) occupy residues 686 to 706, 734 to 754, 808 to 828, 830 to 850, 913 to 933, and 950 to 970; these read YWPI…IFPV, LMFF…GFFM, MGLL…GLAY, WKFA…AGYL, VMTL…ALGF, and FFTV…LFGF. The ABC transmembrane type-1 2 domain maps to 691 to 976; it reads LIGLVACVVT…LFGFSSNLGK (286 aa). N1007 and N1021 each carry an N-linked (GlcNAc...) asparagine glycan. The ABC transporter 2 domain occupies 1017–1255; it reads VDMQNVTFAY…QGNYFKMHES (239 aa). 1052 to 1059 lines the ATP pocket; it reads GTSGSGKS. N-linked (GlcNAc...) asparagine glycosylation occurs at N1106.

It belongs to the ABC transporter superfamily. ABCB family. Multidrug resistance exporter (TC 3.A.1.201) subfamily.

The protein localises to the cell membrane. ABC-type transmembrane transporter; part of the gene cluster that mediates the biosynthesis of 11'-deoxyverticillin A, one of the dimeric epipolythiodioxopiperazines (ETPs) from the verticillin family that are toxic secondary metabolites. The verA multidrug transporter is probably involved in the secretion of 11'-deoxyverticillin A. This Clonostachys rogersoniana protein is ABC-type transmembrane transporter verA.